Reading from the N-terminus, the 343-residue chain is GDP-D-glucose phosphorylase 1 (343 aa).

Catalysis depends on His-183, which acts as the Tele-GMP-histidine intermediate.

It belongs to the GDPGP1 family.

It localises to the cytoplasm. The catalysed reaction is GDP-alpha-D-glucose + phosphate = alpha-D-glucose 1-phosphate + GDP + H(+). Specific and highly efficient GDP-D-glucose phosphorylase regulating the levels of GDP-D-glucose in cells. In Danio rerio (Zebrafish), this protein is GDP-D-glucose phosphorylase 1 (gdpgp1).